The sequence spans 431 residues: Putative malic acid transport protein (431 aa).

The next 10 helical transmembrane spans lie at 30 to 50, 62 to 82, 101 to 121, 136 to 156, 167 to 187, 201 to 221, 239 to 259, 284 to 304, 318 to 338, and 346 to 366; these read FTWA…VTSL, GKII…CITF, VLFM…LYPY, ILYW…FYSL, IIPA…IASA, VVAG…VYAV, GMFI…DLAF, FMAL…FVSV, VSWF…QELG, and VCIV…ILIL. Residues 402–424 are compositionally biased toward basic and acidic residues; it reads EEEKDEAERSKRKAEESDGKTTR. A disordered region spans residues 402 to 431; the sequence is EEEKDEAERSKRKAEESDGKTTRELTSGGL.

The protein belongs to the tellurite-resistance/dicarboxylate transporter (TDT) family.

It is found in the membrane. In Schizosaccharomyces pombe (strain 972 / ATCC 24843) (Fission yeast), this protein is Putative malic acid transport protein.